The following is a 500-amino-acid chain: Mucin-like protein 3 (500 aa).

The N-terminal stretch at 1 to 27 is a signal peptide; it reads MAQPTSGLYSTFGFFICLLFFPASWEA. Residues 28–429 are Extracellular-facing; that stretch reads GANTFQELQK…GENNSFPVWA (402 aa). 2 disordered regions span residues 55–198 and 275–324; these read THRA…SQKP and EGKT…PTAS. Residues 58-71 show a composition bias toward basic and acidic residues; that stretch reads ASSDQKTSRQHPPD. The span at 76 to 89 shows a compositional bias: polar residues; that stretch reads TATQKAKNQCNTTR. N108 carries an N-linked (GlcNAc...) asparagine glycan. Composition is skewed to basic and acidic residues over residues 111–123 and 132–142; these read VRHE…EKDL and ARNERSADDPR. A glycan (N-linked (GlcNAc...) asparagine) is linked at N148. 3 stretches are compositionally biased toward polar residues: residues 159–178, 279–289, and 298–324; these read PRRN…TTKS, SPASESSSQAQ, and TSAS…PTAS. The chain crosses the membrane as a helical span at residues 430-450; that stretch reads IVIVILMAVIILLVFIGLILL. Over 451-500 the chain is Cytoplasmic; that stretch reads VSCASRARHVLTQNSEEPEPQPEDKGSRNSYPVYLMEQQNLNLNQIPSPP.

The protein localises to the cell membrane. It is found in the cytoplasm. Its function is as follows. May modulate NF-kappaB signaling and play a role in cell growth. The polypeptide is Mucin-like protein 3 (Mus musculus (Mouse)).